Consider the following 383-residue polypeptide: S-adenosylmethionine synthase (383 aa).

An ATP-binding site is contributed by H15. Position 17 (D17) interacts with Mg(2+). E43 serves as a coordination point for K(+). L-methionine contacts are provided by E56 and Q99. Residues 99 to 109 (QSQDINQGVDR) are flexible loop. ATP is bound by residues 164 to 166 (DAK), 230 to 231 (RF), D239, 245 to 246 (RK), A262, and K266. An L-methionine-binding site is contributed by D239. K270 contributes to the L-methionine binding site.

It belongs to the AdoMet synthase family. In terms of assembly, homotetramer; dimer of dimers. Requires Mg(2+) as cofactor. K(+) serves as cofactor.

Its subcellular location is the cytoplasm. The catalysed reaction is L-methionine + ATP + H2O = S-adenosyl-L-methionine + phosphate + diphosphate. The protein operates within amino-acid biosynthesis; S-adenosyl-L-methionine biosynthesis; S-adenosyl-L-methionine from L-methionine: step 1/1. Functionally, catalyzes the formation of S-adenosylmethionine (AdoMet) from methionine and ATP. The overall synthetic reaction is composed of two sequential steps, AdoMet formation and the subsequent tripolyphosphate hydrolysis which occurs prior to release of AdoMet from the enzyme. In Actinobacillus succinogenes (strain ATCC 55618 / DSM 22257 / CCUG 43843 / 130Z), this protein is S-adenosylmethionine synthase.